We begin with the raw amino-acid sequence, 69 residues long: Large ribosomal subunit protein uL29 (69 aa).

It belongs to the universal ribosomal protein uL29 family.

In Rhodopseudomonas palustris (strain BisB5), this protein is Large ribosomal subunit protein uL29.